The primary structure comprises 7603 residues: Cysteine repeat modular protein B (7603 aa).

N-linked (GlcNAc...) asparagine glycosylation occurs at Asn172. Residues 223 to 243 (LVGFFLVPVFVVFFVLSSDAT) traverse the membrane as a helical segment. Disordered regions lie at residues 248 to 275 (GVGV…SSPG) and 291 to 323 (RDTK…GKGF). Residues 263–275 (SVSSSSRASSSPG) are compositionally biased toward low complexity. A compositionally biased stretch (basic residues) spans 302-313 (SSRRSARARRRR). 6 N-linked (GlcNAc...) asparagine glycosylation sites follow: Asn329, Asn589, Asn848, Asn1128, Asn1183, and Asn1402. The interval 1554-1574 (VLRSRSGPSHPSSVSQPSPSF) is disordered. Residues 1557-1573 (SRSGPSHPSSVSQPSPS) show a composition bias toward low complexity. N-linked (GlcNAc...) asparagine glycans are attached at residues Asn1622, Asn2578, Asn2664, Asn3094, and Asn3126. The disordered stretch occupies residues 3316–3445 (SNAVPEADEN…SDLTTSQPED (130 aa)). The segment covering 3321–3340 (EADENQVESAEPEQNAEGET) has biased composition (acidic residues). Residues 3342-3360 (EQGAEEAGGNAAEPGAESG) are compositionally biased toward low complexity. Residues Asn3546, Asn4367, Asn4823, Asn4901, Asn5186, Asn5546, and Asn5666 are each glycosylated (N-linked (GlcNAc...) asparagine). The tract at residues 5758 to 5799 (LAESRSDDGTVGDDVDLDDNALSGTTNSGWTTSSSNSERVRK) is disordered. Positions 5767 to 5776 (TVGDDVDLDD) are enriched in acidic residues. The span at 5780-5794 (SGTTNSGWTTSSSNS) shows a compositional bias: low complexity. N-linked (GlcNAc...) asparagine glycans are attached at residues Asn5806, Asn5876, Asn5998, Asn6055, and Asn6369. The segment at 6043-6115 (GEADHTPADG…EASEAESVSA (73 aa)) is disordered. Residues 6051-6060 (DGSSNSSEDS) show a composition bias toward polar residues. The segment covering 6391 to 6405 (EFTDTGPAPDDHTDE) has biased composition (basic and acidic residues). Positions 6391 to 6436 (EFTDTGPAPDDHTDEGGANLDSTGGSGEPSSSAPVDPSGENEGQLL) are disordered. The span at 6410 to 6423 (LDSTGGSGEPSSSA) shows a compositional bias: polar residues. An N-linked (GlcNAc...) asparagine glycan is attached at Asn6453. The next 8 membrane-spanning stretches (helical) occupy residues 6520-6540 (IFIL…ALTI), 6552-6572 (VLIR…LMPA), 6578-6598 (LAGW…ALHP), 6627-6647 (IFVP…CVAT), 6770-6790 (LILG…GFVA), 6831-6851 (CVAL…QEIF), 6888-6908 (GLMV…FEVF), and 6912-6932 (GAIP…SLFV). An N-linked (GlcNAc...) asparagine glycan is attached at Asn7013. Residues 7017-7037 (FVAALSDSLSQLVIAWCQFTI) form a helical membrane-spanning segment. An N-linked (GlcNAc...) asparagine glycan is attached at Asn7061. Positions 7174–7242 (APQLRKENHA…RGLIESEIDD (69 aa)) form a coiled coil. The segment at 7379 to 7603 (AAPAAGLRSH…LKKPGSPKQE (225 aa)) is disordered. The segment covering 7408 to 7417 (LGTNLSTPSA) has biased composition (polar residues). A glycan (N-linked (GlcNAc...) asparagine) is linked at Asn7411. Composition is skewed to low complexity over residues 7474–7496 (PTPS…SVTP), 7509–7541 (SEAP…SSDL), and 7560–7582 (GEAA…AAQP).

As to quaternary structure, component of a complex, at least composed of cysteine repeat modular protein A (CRMPa), cysteine repeat modular protein B (CRMPb), micronemal protein 15 (MIC15) and thrombospondin type 1 domain-containing protein (TSP1).

It is found in the cell membrane. The protein localises to the endoplasmic reticulum. The protein resides in the golgi apparatus. Its function is as follows. Required for triggering rhoptry secretion. Plays a role in host cell invasion. This is Cysteine repeat modular protein B from Toxoplasma gondii.